A 599-amino-acid polypeptide reads, in one-letter code: MKNIRNFSIIAHIDHGKSTLSDRIIQICGGLSDREMEAQVLDSMDLERERGITIKAQSVTLDYKASDGETYQLNFIDTPGHVDFSYEVSRSLAACEGALLVVDAGQGVEAQTLANCYTAMEMDLEVVPVLNKIDLPAADPERVAEEIEDIVGIDATDAVRCSAKTGVGVQDVLERLVRDIPPPEGDPEGPLQALIIDSWFDNYLGVVSLIRIKNGTLRKGDKVKVMSTGQTYNADRLGIFTPKQVDRTELKCGEVGWLVCAIKDIHGAPVGDTLTLARNPAEKALPGFKKVKPQVYAGLFPVRSDDYEAFRDALGKLSLNDASLFYEPESSSALGFGFRCGFLGLLHMEIIQERLEREYDLDLITTAPTVVYEVETTSREVIYVDSPSKLPAVNNIYELREPIAECHMLLPQAYLGNVITLCVEKRGVQTNMVYHGNQVALTYEIPMAEVVLDFFDRLKSTSRGYASLDYNFKRFQASDMVRVDVLINGERVDALALITHRDNSQNRGRELVEKMKDLIPRQQFDIAIQAAIGTHIIARSTVKQLRKNVLAKCYGGDISRKKKLLQKQKEGKKRMKQIGNVELPQEAFLAILHVGKDNK.

Residues 2–184 (KNIRNFSIIA…RLVRDIPPPE (183 aa)) enclose the tr-type G domain. GTP-binding positions include 14 to 19 (DHGKST) and 131 to 134 (NKID).

It belongs to the TRAFAC class translation factor GTPase superfamily. Classic translation factor GTPase family. LepA subfamily.

It is found in the cell inner membrane. It catalyses the reaction GTP + H2O = GDP + phosphate + H(+). Required for accurate and efficient protein synthesis under certain stress conditions. May act as a fidelity factor of the translation reaction, by catalyzing a one-codon backward translocation of tRNAs on improperly translocated ribosomes. Back-translocation proceeds from a post-translocation (POST) complex to a pre-translocation (PRE) complex, thus giving elongation factor G a second chance to translocate the tRNAs correctly. Binds to ribosomes in a GTP-dependent manner. The protein is Elongation factor 4 of Escherichia coli (strain SE11).